A 718-amino-acid polypeptide reads, in one-letter code: Kinesin-2a (718 aa).

In terms of domain architecture, Kinesin motor spans 5–335; the sequence is NIKVIVRCRP…LRYADRAKQI (331 aa). ATP is bound at residue 97–104; sequence GQTGAGKT. Residues Gly-100, Gly-102, Lys-103, Thr-104, and Trp-105 each contribute to the ADP site. Residue Thr-104 coordinates Mg(2+). The stretch at 432 to 477 forms a coiled coil; that stretch reads SRKAADELEAKRRALAEAKQKRESELEQKEALNKEAIVTLTDLKSQ.

It belongs to the TRAFAC class myosin-kinesin ATPase superfamily. Kinesin family. Kinesin II subfamily. As to quaternary structure, monomer.

The protein resides in the cell projection. The protein localises to the cilium. Its subcellular location is the flagellum. It is found in the cytoplasm. It localises to the cytoskeleton. The protein resides in the flagellum axoneme. The protein localises to the flagellum basal body. Involved in anterograde intraflagellar transport (IFT). Involved in flagellar assembly. The chain is Kinesin-2a from Giardia intestinalis (strain ATCC 50803 / WB clone C6) (Giardia lamblia).